The chain runs to 449 residues: Glucose-6-phosphate isomerase (449 aa).

Catalysis depends on E291, which acts as the Proton donor. Catalysis depends on residues H312 and K426.

Belongs to the GPI family.

It localises to the cytoplasm. It carries out the reaction alpha-D-glucose 6-phosphate = beta-D-fructose 6-phosphate. Its pathway is carbohydrate biosynthesis; gluconeogenesis. It functions in the pathway carbohydrate degradation; glycolysis; D-glyceraldehyde 3-phosphate and glycerone phosphate from D-glucose: step 2/4. Functionally, catalyzes the reversible isomerization of glucose-6-phosphate to fructose-6-phosphate. In Streptococcus pyogenes serotype M5 (strain Manfredo), this protein is Glucose-6-phosphate isomerase.